Here is a 398-residue protein sequence, read N- to C-terminus: Arylacetamide deacetylase (398 aa).

Topologically, residues 1–5 are cytoplasmic; it reads MGKTI. The helical; Signal-anchor for type II membrane protein transmembrane segment at 6-26 threads the bilayer; it reads SLLISVVLVAYYLYIPLPDAI. The Lumenal portion of the chain corresponds to 27 to 398; that stretch reads EEPWKVVWET…QYLSWLIKNL (372 aa). An Involved in the stabilization of the negatively charged intermediate by the formation of the oxyanion hole motif is present at residues 110–112; the sequence is HGG. A disulfide bond links Cys115 and Cys339. The active site involves Ser188. N-linked (GlcNAc...) asparagine glycosylation is present at Asn281. Catalysis depends on residues Asp342 and His372.

The protein belongs to the 'GDXG' lipolytic enzyme family. Post-translationally, N-glycosylated. Highest levels in liver with lower levels in jejunum and kidney.

The protein resides in the endoplasmic reticulum membrane. It is found in the microsome membrane. The enzyme catalyses a triacylglycerol + H2O = a diacylglycerol + a fatty acid + H(+). Its function is as follows. Displays cellular triglyceride lipase activity in liver, increases the levels of intracellular fatty acids derived from the hydrolysis of newly formed triglyceride stores and plays a role in very low-density lipoprotein assembly. Displays serine esterase activity in liver. Deacetylates a variety of arylacetamide substrates, including xenobiotic compounds and procarcinogens, converting them to the primary arylamide compounds and increasing their toxicity. This is Arylacetamide deacetylase (Aadac) from Mus musculus (Mouse).